A 229-amino-acid chain; its full sequence is 2-C-methyl-D-erythritol 4-phosphate cytidylyltransferase (229 aa).

The protein belongs to the IspD/TarI cytidylyltransferase family. IspD subfamily.

The enzyme catalyses 2-C-methyl-D-erythritol 4-phosphate + CTP + H(+) = 4-CDP-2-C-methyl-D-erythritol + diphosphate. The protein operates within isoprenoid biosynthesis; isopentenyl diphosphate biosynthesis via DXP pathway; isopentenyl diphosphate from 1-deoxy-D-xylulose 5-phosphate: step 2/6. Its function is as follows. Catalyzes the formation of 4-diphosphocytidyl-2-C-methyl-D-erythritol from CTP and 2-C-methyl-D-erythritol 4-phosphate (MEP). This is 2-C-methyl-D-erythritol 4-phosphate cytidylyltransferase from Neisseria gonorrhoeae (strain NCCP11945).